The following is a 718-amino-acid chain: Manganese-exporting P-type ATPase (718 aa).

The HMA domain maps to 11 to 78; sequence GRMRVKVDWV…AIKGAAHVAA (68 aa). 6 helical membrane-spanning segments follow: residues 87 to 105, 128 to 146, 154 to 168, 177 to 191, 327 to 351, and 357 to 375; these read HSAE…GGVA, TVAT…RGAL, AGTD…VASL, LTVL…YLQD, VGEN…LITG, and MTML…TPTA. Catalysis depends on D408, which acts as the 4-aspartylphosphate intermediate. Mg(2+)-binding residues include D408, T410, and D610. The next 2 helical transmembrane spans lie at 661-680 and 690-709; these read AVDV…AAGL and PVLA…ANSS.

It belongs to the cation transport ATPase (P-type) (TC 3.A.3) family. Type IB subfamily.

Its subcellular location is the cell membrane. It carries out the reaction Mn(2+)(in) + ATP + H2O = Mn(2+)(out) + ADP + phosphate + H(+). Functionally, high affinity, slow turnover Mn(2+) transporting ATPase. The protein is Manganese-exporting P-type ATPase (ctpC) of Mycobacterium bovis (strain ATCC BAA-935 / AF2122/97).